A 433-amino-acid chain; its full sequence is MRSHGQQISDRLTVEVDCHSLGPSDCPSMTSSFSPLDSPTPTPTSLYSQSSMASPVWHEHSHYHHGLPMERRTSATPLRSAFRMTDLTAGDGMMNMPCGHMDRQEQMPLPDYLPGYDDNVEQLWIPQEMPKTYQEPQFPYQASMPQYNQMARNYYHRPQQAGYLPESASNPCLSRPIFTQPMERMPNSASMTNMLHWMPSHESLVPQTITPAQVQPYPSGPVTPPSSAYSDFPTNIPTFKSHTPSTPHRSVSMGTPSGSDTPVSRISGHNDYQEEFQLSPVYREGMMQRHRQPSRKPSKKQLLRSNLSLENLPSIIKQVQFKCKEPGCKGRFKRQEHLKRHMKSHSKEKPHVCWVPGCHRAFSRSDNLNAHYTKTHSKRGGRNRYVATLDETSQDFDPDFRGQLTPDGRPIYGSKLEDSMPDCGELSVDGWDD.

3 disordered regions span residues 24-49 (SDCP…LYSQ), 240-269 (KSHT…ISGH), and 286-306 (MMQR…LRSN). The span at 30 to 49 (TSSFSPLDSPTPTPTSLYSQ) shows a compositional bias: low complexity. Over residues 240 to 264 (KSHTPSTPHRSVSMGTPSGSDTPVS) the composition is skewed to polar residues. Positions 288–302 (QRHRQPSRKPSKKQL) are enriched in basic residues. 2 C2H2-type zinc fingers span residues 321–345 (FKCK…MKSH) and 351–376 (HVCW…TKTH). The segment at 391-423 (ETSQDFDPDFRGQLTPDGRPIYGSKLEDSMPDC) is disordered.

It is found in the nucleus. Its function is as follows. BrlA, abaA and wetA are pivotal regulators of conidiophore development and conidium maturation. They act individually and together to regulate their own expression and that of numerous other sporulation-specific genes. Binds promoters of target genes at brlA response elements (BREs) containing the conserved sequence 5'-(C/A)(A/G)AGGG(G/A)-3'. Regulates genes involved in conidiogenesis. The protein is C2H2 type master regulator of conidiophore development brlA of Penicillium digitatum (strain PHI26 / CECT 20796) (Green mold).